A 123-amino-acid chain; its full sequence is Large ribosomal subunit protein bL12 (123 aa).

The protein belongs to the bacterial ribosomal protein bL12 family. Homodimer. Part of the ribosomal stalk of the 50S ribosomal subunit. Forms a multimeric L10(L12)X complex, where L10 forms an elongated spine to which 2 to 4 L12 dimers bind in a sequential fashion. Binds GTP-bound translation factors.

Its function is as follows. Forms part of the ribosomal stalk which helps the ribosome interact with GTP-bound translation factors. Is thus essential for accurate translation. This is Large ribosomal subunit protein bL12 from Geobacillus kaustophilus (strain HTA426).